Reading from the N-terminus, the 386-residue chain is MNEPAKHRLGCTRTPEPDIRLRKGHQLDDTRGSNNDNYQGDLEPSLETPVCSSYYENSPEEPECHDDNSQEDEGFMGMSPLLQAHHAMERMEEFVCKVWEGRWRVIPHDVLPDWLKDNDFLLHGHRPPMPSFRACFKSIFRIHTETGNIWTHLLGCVFFLCLGIFYMFRPNISFVAPLQEKVVFGLFFLGAILCLSFSWLFHTVYCHSEGVSRLFSKLDYSGIALLIMGSFVPWLYYSFYCNPQPCFIYLIVICVLGIAAIIVSQWDMFATPQYRGVRAGVFVGLGLSGIIPTLHYVISEGFLKAATIGQIGWLMLMASLYITGAALYAARIPERFFPGKCDIWFHSHQLFHIFVVAGAFVHFHGVSNLQEFRFMIGGGCTEEDAL.

The interval 1 to 72 (MNEPAKHRLG…ECHDDNSQED (72 aa)) is disordered. Residues 1-147 (MNEPAKHRLG…SIFRIHTETG (147 aa)) lie on the Cytoplasmic side of the membrane. Over residues 15-31 (PEPDIRLRKGHQLDDTR) the composition is skewed to basic and acidic residues. Over residues 58–72 (SPEEPECHDDNSQED) the composition is skewed to acidic residues. A helical transmembrane segment spans residues 148–168 (NIWTHLLGCVFFLCLGIFYMF). At 169–181 (RPNISFVAPLQEK) the chain is on the extracellular side. A helical transmembrane segment spans residues 182–202 (VVFGLFFLGAILCLSFSWLFH). H202 lines the Zn(2+) pocket. Over 203–213 (TVYCHSEGVSR) the chain is Cytoplasmic. Residues 214 to 234 (LFSKLDYSGIALLIMGSFVPW) form a helical membrane-spanning segment. The Extracellular portion of the chain corresponds to 235 to 245 (LYYSFYCNPQP). Residues 246–266 (CFIYLIVICVLGIAAIIVSQW) traverse the membrane as a helical segment. Over 267 to 273 (DMFATPQ) the chain is Cytoplasmic. A helical membrane pass occupies residues 274–294 (YRGVRAGVFVGLGLSGIIPTL). At 295 to 309 (HYVISEGFLKAATIG) the chain is on the extracellular side. The helical transmembrane segment at 310–330 (QIGWLMLMASLYITGAALYAA) threads the bilayer. At 331 to 348 (RIPERFFPGKCDIWFHSH) the chain is on the cytoplasmic side. Zn(2+)-binding residues include H348 and H352. Residues 349-369 (QLFHIFVVAGAFVHFHGVSNL) form a helical membrane-spanning segment. Residues 370–386 (QEFRFMIGGGCTEEDAL) lie on the Extracellular side of the membrane.

The protein belongs to the ADIPOR family. May form homooligomers and heterooligomers with ADIPOR1. Interacts with APPL2 (via BAR domain); ADIPOQ dissociates this interaction. In terms of tissue distribution, detected in liver and quadriceps muscle (at protein level). Highly expressed in liver. Highly expressed in white adipose tissue, and at intermediate levels in brown adipose tissue. Expressed at intermediate level in heart, kidney, lung and skeletal muscle. Weakly expressed in brain, spleen and testis.

The protein localises to the cell membrane. Functionally, receptor for ADIPOQ, an essential hormone secreted by adipocytes that regulates glucose and lipid metabolism. Required for normal body fat and glucose homeostasis. ADIPOQ-binding activates a signaling cascade that leads to increased PPARA activity, and ultimately to increased fatty acid oxidation and glucose uptake. Has intermediate affinity for globular and full-length adiponectin. Required for normal revascularization after chronic ischemia caused by severing of blood vessels. This Mus musculus (Mouse) protein is Adiponectin receptor protein 2.